Reading from the N-terminus, the 803-residue chain is Sensor histidine kinase CheAY (803 aa).

A Phosphohistidine modification is found at His47. 2 disordered regions span residues 134–185 and 209–255; these read LESA…DEPD and EADK…ENKA. Basic and acidic residues-rich tracts occupy residues 136–166, 209–226, and 233–254; these read SAKERTTEAPQKENKEETKEEAKEENKENKA, EADKERRAQKKQEAKPKQ, and ETPKAPKTETKAKAKADTEENK. Positions 270 to 517 constitute a Histidine kinase domain; it reads RLDHLMNLIG…TQKLKIPLTL (248 aa). His273 is subject to Phosphohistidine; by autocatalysis. A CheW-like domain is found at 519-653; it reads IIQALLVGVQ…VGAMMDMAKS (135 aa). The Response regulatory domain maps to 678 to 796; sequence IVLAIDDSST…YLTTVVKRSI (119 aa). Asp729 is modified (4-aspartylphosphate).

Post-translationally, autophosphorylated.

The catalysed reaction is ATP + protein L-histidine = ADP + protein N-phospho-L-histidine.. Functionally, member of the two-component regulatory system CheAY/CheY that regulates chemotaxis and colonization of the gastric mucosa. Functions as a sensor protein kinase which is autophosphorylated at a histidine residue and transfers its phosphate group to the conserved aspartic acid residue in the regulatory domain of CheY. In turn, phosphorylated CheY (CheY-P) interacts with the flagellar motor protein FliM to cause clockwise flagellar rotation and bacterial reversals, as opposed to straight swimming when CheY is not phosphorylated. The chain is Sensor histidine kinase CheAY (cheAY) from Helicobacter pylori (strain ATCC 700392 / 26695) (Campylobacter pylori).